The sequence spans 232 residues: Succinyl-CoA:3-ketoacid coenzyme A transferase subunit A (232 aa).

A CoA-binding site is contributed by 24–30; the sequence is GGFGLCG.

The protein belongs to the 3-oxoacid CoA-transferase subunit A family. As to quaternary structure, heterodimer of a subunit A and a subunit B.

It catalyses the reaction a 3-oxo acid + succinyl-CoA = a 3-oxoacyl-CoA + succinate. The sequence is that of Succinyl-CoA:3-ketoacid coenzyme A transferase subunit A (scoA) from Helicobacter pylori (strain ATCC 700392 / 26695) (Campylobacter pylori).